The primary structure comprises 500 residues: Pyridine nucleotide-disulfide oxidoreductase domain-containing protein 1 (500 aa).

Methionine 1 bears the N-acetylmethionine mark. The segment at 211 to 235 (TRYTTEGRKKEARSKSKADNVGSAL) is disordered. A compositionally biased stretch (basic and acidic residues) spans 213 to 228 (YTTEGRKKEARSKSKA).

It belongs to the class-I pyridine nucleotide-disulfide oxidoreductase family. PYROXD1 subfamily. FAD serves as cofactor.

The protein localises to the nucleus. It localises to the cytoplasm. The protein resides in the myofibril. It is found in the sarcomere. Functionally, probable FAD-dependent oxidoreductase; involved in the cellular oxidative stress response. Required for normal sarcomere structure and muscle fiber integrity. The sequence is that of Pyridine nucleotide-disulfide oxidoreductase domain-containing protein 1 (PYROXD1) from Homo sapiens (Human).